A 212-amino-acid polypeptide reads, in one-letter code: Thymidylate kinase (212 aa).

7 to 14 lines the ATP pocket; sequence GGEGCGKT.

The protein belongs to the thymidylate kinase family.

It catalyses the reaction dTMP + ATP = dTDP + ADP. Phosphorylation of dTMP to form dTDP in both de novo and salvage pathways of dTTP synthesis. This chain is Thymidylate kinase, found in Gloeobacter violaceus (strain ATCC 29082 / PCC 7421).